Reading from the N-terminus, the 641-residue chain is FAD-binding monooxygenase ausB (641 aa).

Residues 1-68 are disordered; sequence MAIGPKPESI…DSTTNVPYSL (68 aa). Over residues 49-68 the composition is skewed to polar residues; sequence WLTSTDQPQPDSTTNVPYSL. Residues 115–118, 127–128, and Y133 contribute to the FAD site; these read TWYW and DI. 125 to 127 serves as a coordination point for NADP(+); it reads MCD. Residues 272–278 and 295–296 each bind NADP(+); these read TGSTAVQ and RT.

It belongs to the FAD-binding monooxygenase family. Requires FAD as cofactor.

The catalysed reaction is protoaustinoid A + AH2 + O2 = berkeleyone A + A + H2O. Its pathway is secondary metabolite biosynthesis; terpenoid biosynthesis. Its function is as follows. FAD-binding monooxygenase; part of the gene cluster A that mediates the biosynthesis of the fungal meroterpenoid acetoxydehydroaustin. The first step of the pathway is the synthesis of 3,5-dimethylorsellinic acid by the polyketide synthase ausA. 3,5-dimethylorsellinic acid is then prenylated by the polyprenyl transferase ausN. Further epoxidation by the FAD-dependent monooxygenase ausM and cyclization by the probable terpene cyclase ausL lead to the formation of protoaustinoid A. Protoaustinoid A is then oxidized to spiro-lactone preaustinoid A3 by the combined action of the FAD-binding monooxygenases ausB and ausC, and the dioxygenase ausE. Acid-catalyzed keto-rearrangement and ring contraction of the tetraketide portion of preaustinoid A3 by ausJ lead to the formation of preaustinoid A4. The aldo-keto reductase ausK, with the help of ausH, is involved in the next step by transforming preaustinoid A4 into isoaustinone which is in turn hydroxylated by the P450 monooxygenase ausI to form austinolide. The cytochrome P450 monooxygenase ausG then modifies austinolide to austinol. Austinol is further acetylated to austin by the O-acetyltransferase ausP, which spontaneously changes to dehydroaustin. The cytochrome P450 monooxygenase then converts dehydroaustin is into 7-dehydrodehydroaustin. The hydroxylation catalyzed by ausR permits the second O-acetyltransferase ausQ to add an additional acetyl group to the molecule, leading to the formation of acetoxydehydroaustin. Due to genetic rearrangements of the clusters and the subsequent loss of some enzymes, the end product of the Penicillium brasilianum austinoid biosynthesis clusters is acetoxydehydroaustin. The chain is FAD-binding monooxygenase ausB from Penicillium brasilianum.